A 1059-amino-acid polypeptide reads, in one-letter code: Zinc finger protein 865 (1059 aa).

3 disordered regions span residues 1–24 (MEAN…EDGV), 58–142 (LPCA…DAAF), and 161–206 (NLKR…CDPT). Residues 8–21 (SGAGGGGSSGIGGE) are compositionally biased toward gly residues. Residues 61–78 (APGPPPQPPPQPPPPQYD) show a composition bias toward pro residues. Positions 93 to 119 (SSSSSSSSSSSSSSSSSSSSSSSSSQA) are enriched in low complexity. Composition is skewed to pro residues over residues 124–137 (PPLP…PPPL) and 183–198 (APGP…PGPP). C2H2-type zinc fingers lie at residues 224–246 (FPCG…MLVH) and 252–274 (YECG…RRCH). Residues 275 to 342 (KDVPPAAGGP…PAGVGVPPPA (68 aa)) are disordered. Positions 281–296 (AGGPPQPGPHLPPLGL) are enriched in pro residues. Composition is skewed to low complexity over residues 297–316 (PAPA…SSGP) and 324–337 (APSA…AGVG). 4 C2H2-type zinc fingers span residues 350 to 372 (FACP…QIIH), 378 to 400 (FSCS…VKTH), 407 to 429 (LPCG…QAAH), and 441 to 463 (YPCD…KAAH). Positions 461–503 (AAHAPPAAAAEAPKDGAASAPQPPPTFPPGPYLLPPDPPTTDS) are disordered. The segment covering 463–480 (HAPPAAAAEAPKDGAASA) has biased composition (low complexity). Positions 481-499 (PQPPPTFPPGPYLLPPDPP) are enriched in pro residues. 5 C2H2-type zinc fingers span residues 550 to 572 (FCCG…ERIH), 578 to 600 (HQCP…HVVH), 606 to 628 (YKCE…RQVH), 669 to 691 (YACS…KEVH), and 697 to 719 (YGCD…KLVH). Residues 726-747 (LLPPAPGGLQPPDGSSGTDAAS) are disordered. 9 C2H2-type zinc fingers span residues 792 to 814 (FSCA…KYVH), 820 to 842 (LGCG…RRSH), 848 to 870 (FRCP…QRCH), 876 to 898 (YRCG…RVVH), 904 to 926 (FKCG…RRLH), 932 to 954 (QRCS…QRLH), 960 to 982 (YRCE…QRAH), 989 to 1011 (LRCP…LAAH), and 1017 to 1039 (FRCS…RLAH). Residue Lys802 forms a Glycyl lysine isopeptide (Lys-Gly) (interchain with G-Cter in SUMO2) linkage. Residue Lys1040 forms a Glycyl lysine isopeptide (Lys-Gly) (interchain with G-Cter in SUMO2) linkage.

Belongs to the krueppel C2H2-type zinc-finger protein family.

It is found in the nucleus. Its function is as follows. May be involved in transcriptional regulation. This is Zinc finger protein 865 (ZNF865) from Homo sapiens (Human).